The sequence spans 444 residues: 3-isopropylmalate dehydratase large subunit (444 aa).

Positions 348, 408, and 411 each coordinate [4Fe-4S] cluster.

This sequence belongs to the aconitase/IPM isomerase family. LeuC type 1 subfamily. Heterodimer of LeuC and LeuD. [4Fe-4S] cluster is required as a cofactor.

The catalysed reaction is (2R,3S)-3-isopropylmalate = (2S)-2-isopropylmalate. Its pathway is amino-acid biosynthesis; L-leucine biosynthesis; L-leucine from 3-methyl-2-oxobutanoate: step 2/4. Catalyzes the isomerization between 2-isopropylmalate and 3-isopropylmalate, via the formation of 2-isopropylmaleate. The protein is 3-isopropylmalate dehydratase large subunit of Buchnera aphidicola subsp. Uroleucon ambrosiae.